A 55-amino-acid polypeptide reads, in one-letter code: Hydrophobic protein LTI6B (55 aa).

A run of 2 helical transmembrane segments spans residues 8-28 (IDILIAIILPPLGVFLKFGCG) and 31-51 (FWICLLLTFLGYIPGIIYAIY).

This sequence belongs to the UPF0057 (PMP3) family.

It is found in the membrane. Plays a role in the regulation of membrane potential. Could mediate a proton leak. This Oryza sativa subsp. indica (Rice) protein is Hydrophobic protein LTI6B (LTI6B).